The chain runs to 210 residues: MASSAEAIVTHAERSISEDAIVAAARERADDIGAGAVTPAVGALLSVLARLTGGRAVVEVGTGAGVSGLWLLSGMRDDGVLTTIDVEPEHQRIAKQGFSEAGVGPGRTRLISGRAQEVLTRLADESYDLVFIDADPVDQPQFVVEGVRLLRSGGAIVVHRAALGGRAGDADARDAEVTAVREAARLIAEDERLTPVLIPLGDGLLAAVRD.

Residues valine 37, glutamate 59, 61–62 (GT), serine 67, aspartate 85, and valine 86 contribute to the S-adenosyl-L-methionine site. Aspartate 133 is a binding site for substrate. Position 135 (aspartate 135) interacts with S-adenosyl-L-methionine.

This sequence belongs to the class I-like SAM-binding methyltransferase superfamily. Cation-dependent O-methyltransferase family.

The protein is Putative O-methyltransferase MSMEG_5073/MSMEI_4947 of Mycolicibacterium smegmatis (strain ATCC 700084 / mc(2)155) (Mycobacterium smegmatis).